Reading from the N-terminus, the 346-residue chain is Methylthioribose-1-phosphate isomerase (346 aa).

Substrate contacts are provided by residues 46-48 (RGA), arginine 89, and glutamine 196. The active-site Proton donor is the aspartate 237. Substrate is bound at residue 247 to 248 (NK).

It belongs to the eIF-2B alpha/beta/delta subunits family. MtnA subfamily.

It catalyses the reaction 5-(methylsulfanyl)-alpha-D-ribose 1-phosphate = 5-(methylsulfanyl)-D-ribulose 1-phosphate. Its pathway is amino-acid biosynthesis; L-methionine biosynthesis via salvage pathway; L-methionine from S-methyl-5-thio-alpha-D-ribose 1-phosphate: step 1/6. Its function is as follows. Catalyzes the interconversion of methylthioribose-1-phosphate (MTR-1-P) into methylthioribulose-1-phosphate (MTRu-1-P). The protein is Methylthioribose-1-phosphate isomerase of Citrifermentans bemidjiense (strain ATCC BAA-1014 / DSM 16622 / JCM 12645 / Bem) (Geobacter bemidjiensis).